A 63-amino-acid polypeptide reads, in one-letter code: Small ribosomal subunit protein eS31 (63 aa).

4 residues coordinate Zn(2+): Cys31, Cys34, Cys50, and Cys53.

This sequence belongs to the eukaryotic ribosomal protein eS31 family. In terms of assembly, part of the 30S ribosomal subunit. Requires Zn(2+) as cofactor.

This chain is Small ribosomal subunit protein eS31 (rps27ae), found in Aeropyrum pernix (strain ATCC 700893 / DSM 11879 / JCM 9820 / NBRC 100138 / K1).